Here is a 265-residue protein sequence, read N- to C-terminus: H-2 class II histocompatibility antigen, A-Q beta chain (265 aa).

An N-terminal signal peptide occupies residues 1–27; it reads MALQIPSLLLSAAVVVLMVLSSPRTEG. A beta-1 region spans residues 28 to 122; it reads GNSERHFVAQ…VETHTSLRRL (95 aa). At 28–227 the chain is on the extracellular side; it reads GNSERHFVAQ…AQSESARSKM (200 aa). Disulfide bonds link Cys42/Cys106 and Cys145/Cys201. A glycan (N-linked (GlcNAc...) asparagine) is linked at Asn46. The tract at residues 123–217 is beta-2; it reads EQPNVAISLS…LKSPITVEWR (95 aa). The 89-residue stretch at 125–213 folds into the Ig-like C1-type domain; it reads PNVAISLSRT…EHPSLKSPIT (89 aa). Positions 218–227 are connecting peptide; that stretch reads AQSESARSKM. The chain crosses the membrane as a helical span at residues 228–247; the sequence is LSGIGGCVLGVIFLGLGLFI. Over 248-265 the chain is Cytoplasmic; it reads RHRSQKGPRGPPPAGLLQ.

It belongs to the MHC class II family. Post-translationally, ubiquitinated in immature dendritic cells leading to down-regulation of MHC class II.

It localises to the membrane. The sequence is that of H-2 class II histocompatibility antigen, A-Q beta chain (H2-Ab1) from Mus musculus (Mouse).